Reading from the N-terminus, the 596-residue chain is Putative terpene synthase 3, chloroplastic (596 aa).

A chloroplast-targeting transit peptide spans 1–46 (MATLSMQVSTLSKQVKNLNTFGMGSASKLPMVARRVSTIRLRPICS). The Mn(2+) site is built by D349 and D353. A DDXXD motif motif is present at residues 349–353 (DDVYD). Homodimerization regions lie at residues 355 to 361 (YGTLDEL) and 427 to 464 (EAKW…FTLP). Mn(2+) is bound by residues D493 and E501.

It belongs to the terpene synthase family. As to quaternary structure, homodimer. It depends on Mn(2+) as a cofactor. The cofactor is Mg(2+).

The protein localises to the plastid. Its subcellular location is the chloroplast. It functions in the pathway secondary metabolite biosynthesis; terpenoid biosynthesis. Functionally, putative monoterpene synthase. The polypeptide is Putative terpene synthase 3, chloroplastic (Thymus vulgaris (Thyme)).